Here is a 66-residue protein sequence, read N- to C-terminus: MAKGKDVRVTVILECTDCVRNSVNKVSTGISRYITQKNRHNTPNRLELKKFCPYCYKHTVHGEIKK.

Belongs to the bacterial ribosomal protein bL33 family.

It localises to the plastid. Its subcellular location is the chloroplast. This chain is Large ribosomal subunit protein bL33c, found in Coffea arabica (Arabian coffee).